Reading from the N-terminus, the 136-residue chain is Membrane-bound negative regulator YvrL (136 aa).

4 helical membrane-spanning segments follow: residues leucine 18 to leucine 38, alanine 46 to phenylalanine 66, leucine 83 to threonine 103, and leucine 106 to isoleucine 126.

It localises to the cell membrane. Functionally, negatively regulates RNA polymerase sigma factor SigO-dependent transcription. Prevents the expression or secretion of OxdC under nonstress conditions. May act as an anti-sigma factor. This is Membrane-bound negative regulator YvrL (yvrL) from Bacillus subtilis (strain 168).